Here is a 152-residue protein sequence, read N- to C-terminus: Protein IpgF (152 aa).

The first 17 residues, 1 to 17, serve as a signal peptide directing secretion; the sequence is MSRFVFILLCFIPYLGR.

Belongs to the IagB/IpgF/P19 family.

In Shigella sonnei, this protein is Protein IpgF (ipgF).